A 379-amino-acid polypeptide reads, in one-letter code: Thiosulfate/3-mercaptopyruvate sulfurtransferase 1, mitochondrial (379 aa).

Residues 1-56 constitute a mitochondrion transit peptide; sequence MASTLFSRTFLAASHRLITPSLPQKIFNPATFLSRSLHSQLGSASTAYKSTTWARR. The residue at position 57 (A57) is an N-acetylalanine. 2 Rhodanese domains span residues 91–208 and 259–373; these read REPD…DVES and EDPT…LPIE. C333 functions as the Cysteine persulfide intermediate in the catalytic mechanism.

As to expression, expressed in roots, rosette and cauline leaves, stems, flowers and siliques.

The protein resides in the mitochondrion. It catalyses the reaction thiosulfate + hydrogen cyanide = thiocyanate + sulfite + 2 H(+). It carries out the reaction 2-oxo-3-sulfanylpropanoate + [thioredoxin]-dithiol = [thioredoxin]-disulfide + hydrogen sulfide + pyruvate + H(+). Its function is as follows. Catalyzes the transfer of a sulfur ion from a donor to cyanide or to other thiol compounds. Substrate preference is 3-mercaptopyruvate &gt; thiosulfate. Involved in embryo and seed development. In Arabidopsis thaliana (Mouse-ear cress), this protein is Thiosulfate/3-mercaptopyruvate sulfurtransferase 1, mitochondrial (STR1).